A 479-amino-acid chain; its full sequence is Origin recognition complex subunit 5 (479 aa).

37 to 44 serves as a coordination point for ATP; the sequence is GYSGTGKT.

This sequence belongs to the ORC5 family. Component of the origin recognition complex (ORC) composed of at least ORC1, ORC2, ORC3, ORC4, ORC5 and ORC6. Interacts with ORC6. Component of a cullin-RING ligase (CRL)-like complex composed of at least the cullin RTT101, a linker protein MMS1, and the potential substrate receptor ORC5. Interacts with RTT101 and MMS1.

The protein resides in the nucleus. Component of the origin recognition complex (ORC) that binds origins of replication. It has a role in both chromosomal replication and mating type transcriptional silencing. Binds to the ARS consensus sequence (ACS) of origins of replication. This subunit is a candidate for the mediation of ATP-dependent binding of ORC to origins. May also be a substrate targeting component of a cullin-RING-based E3 ubiquitin-protein ligase complex RTT101(MMS1-ORC5). The protein is Origin recognition complex subunit 5 (ORC5) of Saccharomyces cerevisiae (strain ATCC 204508 / S288c) (Baker's yeast).